The chain runs to 600 residues: UvrABC system protein C (600 aa).

The GIY-YIG domain occupies 15 to 100 (NSTGVYQYFN…IKQLHPKYNI (86 aa)). The UVR domain occupies 203–238 (SVLLKNLEKQMLVLAQNENYEEAAKVRDQIAMIKDL).

Belongs to the UvrC family. As to quaternary structure, interacts with UvrB in an incision complex.

The protein resides in the cytoplasm. The UvrABC repair system catalyzes the recognition and processing of DNA lesions. UvrC both incises the 5' and 3' sides of the lesion. The N-terminal half is responsible for the 3' incision and the C-terminal half is responsible for the 5' incision. The sequence is that of UvrABC system protein C from Campylobacter jejuni subsp. jejuni serotype O:2 (strain ATCC 700819 / NCTC 11168).